The sequence spans 92 residues: Probable K(+)/H(+) antiporter subunit F (92 aa).

3 helical membrane passes run Ala4 to Leu24, Arg36 to Ile56, and Val62 to Ala82.

The protein belongs to the CPA3 antiporters (TC 2.A.63) subunit F family. As to quaternary structure, may form a hetero-oligomeric complex that consists of six subunits: PhaAB, PhaC, PhaD, PhaE, PhaF and PhaG.

Its subcellular location is the cell membrane. Functionally, part of a K(+) efflux system which is required for the adaptation of R.meliloti to alkaline pH as well as for the infection process during symbiotic nodule development. The chain is Probable K(+)/H(+) antiporter subunit F (phaF) from Rhizobium meliloti (strain 1021) (Ensifer meliloti).